Consider the following 138-residue polypeptide: Small ribosomal subunit protein uS17 (138 aa).

Composition is skewed to basic and acidic residues over residues 1–18 and 43–55; these read MSEEERNRGAEPEERAEA and AFDRDAGKVQKDT. The interval 1–62 is disordered; that stretch reads MSEEERNRGA…KDTRRGRRKE (62 aa).

It belongs to the universal ribosomal protein uS17 family. Part of the 30S ribosomal subunit.

Its function is as follows. One of the primary rRNA binding proteins, it binds specifically to the 5'-end of 16S ribosomal RNA. The protein is Small ribosomal subunit protein uS17 of Rubrobacter xylanophilus (strain DSM 9941 / JCM 11954 / NBRC 16129 / PRD-1).